Reading from the N-terminus, the 753-residue chain is Polyribonucleotide nucleotidyltransferase (753 aa).

Residues Asp-543 and Asp-549 each contribute to the Mg(2+) site. One can recognise a KH domain in the interval 609–668; sequence PRITTVKIPVAKIGELIGPKGKNINALTEETGANISIEDDGTVFISAADGASAEAAIEKI. The region spanning 680–749 is the S1 motif domain; it reads GERFLGTVVK…NRGKISLVPV (70 aa).

Belongs to the polyribonucleotide nucleotidyltransferase family. Mg(2+) is required as a cofactor.

It localises to the cytoplasm. It catalyses the reaction RNA(n+1) + phosphate = RNA(n) + a ribonucleoside 5'-diphosphate. Functionally, involved in mRNA degradation. Catalyzes the phosphorolysis of single-stranded polyribonucleotides processively in the 3'- to 5'-direction. The chain is Polyribonucleotide nucleotidyltransferase from Corynebacterium glutamicum (strain R).